The sequence spans 287 residues: Hydroxyethylthiazole kinase (287 aa).

Substrate is bound at residue M50. R126 and S185 together coordinate ATP. G212 contacts substrate.

The protein belongs to the Thz kinase family. Requires Mg(2+) as cofactor.

The catalysed reaction is 5-(2-hydroxyethyl)-4-methylthiazole + ATP = 4-methyl-5-(2-phosphooxyethyl)-thiazole + ADP + H(+). It functions in the pathway cofactor biosynthesis; thiamine diphosphate biosynthesis; 4-methyl-5-(2-phosphoethyl)-thiazole from 5-(2-hydroxyethyl)-4-methylthiazole: step 1/1. Catalyzes the phosphorylation of the hydroxyl group of 4-methyl-5-beta-hydroxyethylthiazole (THZ). This is Hydroxyethylthiazole kinase from Methanobrevibacter smithii (strain ATCC 35061 / DSM 861 / OCM 144 / PS).